We begin with the raw amino-acid sequence, 143 residues long: Large ribosomal subunit protein uL11 (143 aa).

Belongs to the universal ribosomal protein uL11 family. In terms of assembly, part of the ribosomal stalk of the 50S ribosomal subunit. Interacts with L10 and the large rRNA to form the base of the stalk. L10 forms an elongated spine to which L12 dimers bind in a sequential fashion forming a multimeric L10(L12)X complex. One or more lysine residues are methylated.

Its function is as follows. Forms part of the ribosomal stalk which helps the ribosome interact with GTP-bound translation factors. This Clavibacter sepedonicus (Clavibacter michiganensis subsp. sepedonicus) protein is Large ribosomal subunit protein uL11.